Here is a 931-residue protein sequence, read N- to C-terminus: Semaphorin-6C (931 aa).

The first 25 residues, 1 to 25 (MPRAPHSMPLLLLLLLLSSLPQAQA), serve as a signal peptide directing secretion. Residues 26–605 (AFPQDPTPLL…ASASRSIPIP (580 aa)) are Extracellular-facing. Positions 31-517 (PTPLLTSDLQ…FPGCIVYLSL (487 aa)) constitute a Sema domain. A glycan (N-linked (GlcNAc...) asparagine) is linked at asparagine 71. Disulfide bonds link cysteine 112/cysteine 122, cysteine 140/cysteine 149, cysteine 263/cysteine 374, and cysteine 288/cysteine 333. An N-linked (GlcNAc...) asparagine glycan is attached at asparagine 287. N-linked (GlcNAc...) asparagine glycosylation is present at asparagine 438. Intrachain disulfides connect cysteine 480-cysteine 511, cysteine 520-cysteine 538, cysteine 526-cysteine 571, and cysteine 530-cysteine 546. Residues 556-591 (DVDLTGNQESTEHGDCQDGATGSQSGPGDSAYGVRR) form a disordered region. The helical transmembrane segment at 606–626 (LLLACVAAAFALGASVSGLLV) threads the bilayer. The Cytoplasmic portion of the chain corresponds to 627-931 (SCACRRANRR…PAPHGGHFNF (305 aa)). 2 disordered regions span residues 655–747 (LARL…GGPA) and 777–931 (HGPQ…HFNF). The span at 693-708 (PPELACLPTPETTPEL) shows a compositional bias: low complexity. Basic and acidic residues predominate over residues 893–906 (PEGHRGRSLKRVDV). The span at 911–923 (SPKPPLASPPQPA) shows a compositional bias: pro residues.

Belongs to the semaphorin family.

It localises to the cell membrane. In terms of biological role, may be a stop signal for the dorsal root ganglion neurons in their target areas, and possibly also for other neurons. May also be involved in the maintenance and remodeling of neuronal connections. The polypeptide is Semaphorin-6C (Sema6c) (Mus musculus (Mouse)).